The chain runs to 353 residues: UDP-N-acetylglucosamine--N-acetylmuramyl-(pentapeptide) pyrophosphoryl-undecaprenol N-acetylglucosamine transferase (353 aa).

Residues 10–12 (TGG), Asn124, Ser183, and Gln283 each bind UDP-N-acetyl-alpha-D-glucosamine.

The protein belongs to the glycosyltransferase 28 family. MurG subfamily.

The protein localises to the cell inner membrane. It carries out the reaction di-trans,octa-cis-undecaprenyl diphospho-N-acetyl-alpha-D-muramoyl-L-alanyl-D-glutamyl-meso-2,6-diaminopimeloyl-D-alanyl-D-alanine + UDP-N-acetyl-alpha-D-glucosamine = di-trans,octa-cis-undecaprenyl diphospho-[N-acetyl-alpha-D-glucosaminyl-(1-&gt;4)]-N-acetyl-alpha-D-muramoyl-L-alanyl-D-glutamyl-meso-2,6-diaminopimeloyl-D-alanyl-D-alanine + UDP + H(+). It functions in the pathway cell wall biogenesis; peptidoglycan biosynthesis. Functionally, cell wall formation. Catalyzes the transfer of a GlcNAc subunit on undecaprenyl-pyrophosphoryl-MurNAc-pentapeptide (lipid intermediate I) to form undecaprenyl-pyrophosphoryl-MurNAc-(pentapeptide)GlcNAc (lipid intermediate II). This is UDP-N-acetylglucosamine--N-acetylmuramyl-(pentapeptide) pyrophosphoryl-undecaprenol N-acetylglucosamine transferase from Helicobacter pylori (strain P12).